We begin with the raw amino-acid sequence, 185 residues long: Erythropoietin (185 aa).

Positions 1 to 25 (MLQKTGRGLLAFLLIVLEWTQPSLP) are cleaved as a signal peptide. 2 disulfide bridges follow: cysteine 32-cysteine 180 and cysteine 54-cysteine 58.

It belongs to the EPO/TPO family. In terms of tissue distribution, expressed mainly in heart, liver and brain. Isoform 2 is brain specific.

It is found in the secreted. Erythropoietin is the principal hormone involved in the regulation of erythrocyte differentiation and the maintenance of a physiological level of circulating erythrocyte mass. The chain is Erythropoietin (epo) from Takifugu rubripes (Japanese pufferfish).